The sequence spans 30 residues: uncharacterized protein (30 aa).

This is an uncharacterized protein from Dictyostelium discoideum (Social amoeba).